The primary structure comprises 87 residues: MDMLSAAEQRTLEQRMQKRQVKEFMGAFGGLVEHCFMSCVDDFTSKAISNRESGCINRCVQKWMASQQRISDRFQEHNAQLTAQMNK.

Positions 35–59 match the Twin CX3C motif motif; sequence CFMSCVDDFTSKAISNRESGCINRC. Intrachain disulfides connect C35-C59 and C39-C55.

Belongs to the small Tim family. Heterohexamer; composed of 3 copies of TIM9 and 3 copies of TIM10, named soluble 70 kDa complex. Associates with the TIM22 complex, whose core is composed of TIM22 and TIM54. Interacts with the transmembrane regions of multi-pass transmembrane proteins in transit.

The protein resides in the mitochondrion inner membrane. Mitochondrial intermembrane chaperone that participates in the import and insertion of multi-pass transmembrane proteins into the mitochondrial inner membrane. Also required for the transfer of beta-barrel precursors from the TOM complex to the sorting and assembly machinery (SAM complex) of the outer membrane. Acts as a chaperone-like protein that protects the hydrophobic precursors from aggregation and guide them through the mitochondrial intermembrane space. This chain is Mitochondrial import inner membrane translocase subunit TIM9 (TIM9), found in Gibberella zeae (strain ATCC MYA-4620 / CBS 123657 / FGSC 9075 / NRRL 31084 / PH-1) (Wheat head blight fungus).